The sequence spans 703 residues: Protein FAR1-RELATED SEQUENCE 6 (703 aa).

The tract at residues 1–29 is disordered; it reads MERSESVDEDVQASAYLENDEVRERDDPM. The FAR1 domain occupies 99 to 184; sequence NYYNCYASEV…TLDHNHLLGC (86 aa). The region spanning 297–392 is the MULE domain; that stretch reads VIFIDSSYIS…SLTHIMRKIP (96 aa). Residues 584–620 form an SWIM-type zinc finger; sequence FEVLYNRSVGEVRCICSCFNFYGYLCRHALCVLNFNG.

The protein belongs to the FHY3/FAR1 family. As to expression, expressed in hypocotyls, rosette and cauline leaves, inflorescences stems, flowers and siliques.

It localises to the nucleus. Functionally, putative transcription activator involved in regulating light control of development. May have a role in controlling flowering time. The chain is Protein FAR1-RELATED SEQUENCE 6 (FRS6) from Arabidopsis thaliana (Mouse-ear cress).